Here is a 208-residue protein sequence, read N- to C-terminus: 3-demethoxyubiquinol 3-hydroxylase (208 aa).

Residues Glu-57, Glu-87, His-90, Glu-139, Glu-171, and His-174 each contribute to the Fe cation site.

Belongs to the COQ7 family. Fe cation is required as a cofactor.

The protein resides in the cell membrane. It carries out the reaction a 5-methoxy-2-methyl-3-(all-trans-polyprenyl)benzene-1,4-diol + AH2 + O2 = a 3-demethylubiquinol + A + H2O. The protein operates within cofactor biosynthesis; ubiquinone biosynthesis. Catalyzes the hydroxylation of 2-nonaprenyl-3-methyl-6-methoxy-1,4-benzoquinol during ubiquinone biosynthesis. This Burkholderia thailandensis (strain ATCC 700388 / DSM 13276 / CCUG 48851 / CIP 106301 / E264) protein is 3-demethoxyubiquinol 3-hydroxylase.